We begin with the raw amino-acid sequence, 475 residues long: L-seryl-tRNA(Sec) selenium transferase (475 aa).

Residue lysine 295 is modified to N6-(pyridoxal phosphate)lysine.

Belongs to the SelA family. Requires pyridoxal 5'-phosphate as cofactor.

It is found in the cytoplasm. It catalyses the reaction L-seryl-tRNA(Sec) + selenophosphate + H(+) = L-selenocysteinyl-tRNA(Sec) + phosphate. Its pathway is aminoacyl-tRNA biosynthesis; selenocysteinyl-tRNA(Sec) biosynthesis; selenocysteinyl-tRNA(Sec) from L-seryl-tRNA(Sec) (bacterial route): step 1/1. Converts seryl-tRNA(Sec) to selenocysteinyl-tRNA(Sec) required for selenoprotein biosynthesis. In Desulfovibrio desulfuricans (strain ATCC 27774 / DSM 6949 / MB), this protein is L-seryl-tRNA(Sec) selenium transferase.